Here is a 428-residue protein sequence, read N- to C-terminus: G2/mitotic-specific cyclin-B (428 aa).

Belongs to the cyclin family. Cyclin AB subfamily. Interacts with the CDC2 protein kinase to form a serine/threonine kinase holoenzyme complex also known as maturation promoting factor (MPF). The cyclin subunit imparts substrate specificity to the complex.

In terms of biological role, essential for the control of the cell cycle at the G2/M (mitosis) transition. This chain is G2/mitotic-specific cyclin-B, found in Spisula solidissima (Atlantic surf-clam).